Consider the following 60-residue polypeptide: uncharacterized protein (60 aa).

This is an uncharacterized protein from Autographa californica nuclear polyhedrosis virus (AcMNPV).